The primary structure comprises 445 residues: FAS-associated factor 2 (445 aa).

Ala-2 carries the post-translational modification N-acetylalanine. Positions 12–48 constitute a UBA domain; sequence EQTEKLLQFQDLTGIESMEQCRLALEQHNWNMEAAVQ. Residue Lys-167 is modified to N6-acetyllysine. Residues 275-350 adopt a coiled-coil conformation; sequence SERLEREERN…EEKERKLECL (76 aa). Residues 300–361 are disordered; it reads SLRADQEKER…PEPSPDDPES (62 aa). Residues 303-348 show a composition bias toward basic and acidic residues; the sequence is ADQEKERKKREEKERKRRKEEEVQQQKLAEERRRQNLQEEKERKLE. Residues 357-439 form the UBX domain; sequence DDPESVKIIF…GLSHTEVLFV (83 aa).

As to quaternary structure, identified in a complex that contains SEL1L, OS9, FAF2/UBXD8, UBE2J1/UBC6E and AUP1. Interacts with YOD1. Interacts (via N-terminus) with UBQLN2 (via C-terminus). Interacts with PNPLA2. Interacts with ZFAND2B; probably through VCP. Interacts with LMBR1L and UBAC2.

The protein resides in the cytoplasm. It is found in the lipid droplet. It localises to the endoplasmic reticulum. Its function is as follows. Plays an important role in endoplasmic reticulum-associated degradation (ERAD) that mediates ubiquitin-dependent degradation of misfolded endoplasmic reticulum proteins. By controlling the steady-state expression of the IGF1R receptor, indirectly regulates the insulin-like growth factor receptor signaling pathway. Involved in inhibition of lipid droplet degradation by binding to phospholipase PNPL2 and inhibiting its activity by promoting dissociation of PNPL2 from its endogenous activator, ABHD5 which inhibits the rate of triacylglycerol hydrolysis. Involved in stress granule disassembly: associates with ubiquitinated G3BP1 in response to heat shock, thereby promoting interaction between ubiquitinated G3BP1 and VCP, followed by G3BP1 extraction from stress granules and stress granule disassembly. This chain is FAS-associated factor 2 (Faf2), found in Mus musculus (Mouse).